A 256-amino-acid chain; its full sequence is MKEILITNDDGFEALGIRALRNALKDIAKVTVVAPSSEKSACAHSITLTRPLRFIQLDDGFFKLDDATPSDCIYLALETMYKHKKPDLIISGINHGANLGEDITYSGTCGGAMEGTLQGVASMAISLLYKNDSIDKYGFDLACEISADIVKNIFENGFPLNGREFLNLNIPAVPKNEYKGLKIVPAGHQAYNTNAELHRNPRGLEYYWLGTPNIHYLKENDNECDLAVTFDGYASLTPIKLDMTAHHSINRLKSWI.

The a divalent metal cation site is built by aspartate 9, aspartate 10, serine 40, and asparagine 94.

This sequence belongs to the SurE nucleotidase family. The cofactor is a divalent metal cation.

The protein resides in the cytoplasm. The enzyme catalyses a ribonucleoside 5'-phosphate + H2O = a ribonucleoside + phosphate. Functionally, nucleotidase that shows phosphatase activity on nucleoside 5'-monophosphates. The chain is 5'-nucleotidase SurE from Campylobacter fetus subsp. fetus (strain 82-40).